The sequence spans 626 residues: Chaperone protein DnaK (626 aa).

Position 175 is a phosphothreonine; by autocatalysis (T175). Disordered stretches follow at residues 469 to 488, 498 to 517, and 583 to 626; these read DKGT…GLPK, AEAH…TRNQ, and AQQG…KDNK. The span at 498-516 shows a compositional bias: basic and acidic residues; that stretch reads AEAHEAEDKKRKEDAETRN. Residues 609–626 show a composition bias toward acidic residues; that stretch reads SDDDVVDAEVVDDDKDNK.

The protein belongs to the heat shock protein 70 family.

Functionally, acts as a chaperone. The sequence is that of Chaperone protein DnaK from Bifidobacterium adolescentis (strain ATCC 15703 / DSM 20083 / NCTC 11814 / E194a).